Consider the following 584-residue polypeptide: Potassium-transporting ATPase potassium-binding subunit (584 aa).

Helical transmembrane passes span 8–28 (FLVL…EFMF), 65–85 (SFAV…FILQ), 139–159 (VQNF…IYGF), 172–192 (VLLL…ALVL), 262–282 (FTDL…CFMF), 292–312 (GIAI…LGIW), 398–418 (GLYC…LMVG), 440–460 (ILIP…ITAG), 507–527 (MFVG…AFVA), and 544–564 (LFII…FLPA).

The protein belongs to the KdpA family. In terms of assembly, the system is composed of three essential subunits: KdpA, KdpB and KdpC.

The protein localises to the cell membrane. Functionally, part of the high-affinity ATP-driven potassium transport (or Kdp) system, which catalyzes the hydrolysis of ATP coupled with the electrogenic transport of potassium into the cytoplasm. This subunit binds the extracellular potassium ions and delivers the ions to the membrane domain of KdpB through an intramembrane tunnel. The sequence is that of Potassium-transporting ATPase potassium-binding subunit from Methanoregula boonei (strain DSM 21154 / JCM 14090 / 6A8).